Consider the following 402-residue polypeptide: Argininosuccinate synthase (402 aa).

Residue 8-16 (AYSGGLDTS) participates in ATP binding. Positions 86 and 91 each coordinate L-citrulline. Residue glycine 116 coordinates ATP. L-aspartate-binding residues include threonine 118, asparagine 122, and aspartate 123. Residue asparagine 122 participates in L-citrulline binding. L-citrulline contacts are provided by arginine 126, serine 175, serine 184, glutamate 260, and tyrosine 272.

This sequence belongs to the argininosuccinate synthase family. Type 1 subfamily. Homotetramer.

The protein resides in the cytoplasm. The catalysed reaction is L-citrulline + L-aspartate + ATP = 2-(N(omega)-L-arginino)succinate + AMP + diphosphate + H(+). It functions in the pathway amino-acid biosynthesis; L-arginine biosynthesis; L-arginine from L-ornithine and carbamoyl phosphate: step 2/3. The protein is Argininosuccinate synthase of Clostridium novyi (strain NT).